A 63-amino-acid chain; its full sequence is Large ribosomal subunit protein uL29 (63 aa).

It belongs to the universal ribosomal protein uL29 family.

The sequence is that of Large ribosomal subunit protein uL29 from Alcanivorax borkumensis (strain ATCC 700651 / DSM 11573 / NCIMB 13689 / SK2).